The sequence spans 1941 residues: Diacylglycerol kinase eta (1941 aa).

Residues 93–186 (SIIKEGYLLK…WLGSLKAATA (94 aa)) enclose the PH domain. 2 Phorbol-ester/DAG-type zinc fingers span residues 206-256 (HHHW…IANC) and 279-330 (PHQW…AIAC). The 137-residue stretch at 361-497 (GNFSPLLVFV…DRWSIMVFEK (137 aa)) folds into the DAGKc domain. Disordered regions lie at residues 1030–1068 (TTTL…SPPR), 1132–1164 (CNSN…ETPT), 1215–1257 (LESA…PSSS), and 1276–1295 (RRHS…KDKD). A compositionally biased stretch (low complexity) spans 1133 to 1155 (NSNNNSNNNSNSNSNNNNHNDGN). The region spanning 1878–1941 (WSVNEVVTWL…LQAIKDLSEN (64 aa)) is the SAM domain.

This sequence belongs to the eukaryotic diacylglycerol kinase family.

Its subcellular location is the cytoplasm. It carries out the reaction a 1,2-diacyl-sn-glycerol + ATP = a 1,2-diacyl-sn-glycero-3-phosphate + ADP + H(+). Phosphorylates diacylglycerol (DAG) to generate phosphatidic acid (PA). The protein is Diacylglycerol kinase eta of Drosophila grimshawi (Hawaiian fruit fly).